The primary structure comprises 301 residues: MPAAAQPSWWRLELEPPGELEESLLWRLESLGVHRLAVRFRPEAPEQRTLQAWLPEVDWPEPERVALAEALAQMAEPFGVALPSLRWELQPEEDWALSWKRHWQPDPVGQRLLILPAWLQVPAEHAERLALLIDPGSAFGTGSHPTTRLCLEALEKRSLTGSRVADLGCGSGILGIASLVLGAREVLASDTDSLAVRATAENAALNQAGAHLQVQLGSADVLQQLLAGAPADLLLCNILAPVLTALTPAFSELLTARGEGLLSGLLVDQAPALTAHLEAHGWRVTTEAEQGRWALLAIQRA.

4 residues coordinate S-adenosyl-L-methionine: T147, G168, D190, and N237.

It belongs to the methyltransferase superfamily. PrmA family.

The protein resides in the cytoplasm. It carries out the reaction L-lysyl-[protein] + 3 S-adenosyl-L-methionine = N(6),N(6),N(6)-trimethyl-L-lysyl-[protein] + 3 S-adenosyl-L-homocysteine + 3 H(+). In terms of biological role, methylates ribosomal protein L11. This is Ribosomal protein L11 methyltransferase from Synechococcus sp. (strain RCC307).